A 484-amino-acid chain; its full sequence is Glutelin type-D 1 (484 aa).

Residues M1–A27 form the signal peptide. Disulfide bonds link C38–C71 and C114–C292. Cupin type-1 domains follow at residues L43–K238 and V298–R447.

This sequence belongs to the 11S seed storage protein (globulins) family. Hexamer; each subunit is composed of an acidic and a basic chain derived from a single precursor and linked by a disulfide bond.

Its subcellular location is the protein storage vacuole. Functionally, seed storage protein. This Oryza sativa subsp. japonica (Rice) protein is Glutelin type-D 1.